The following is a 527-amino-acid chain: Putative ABC transporter peptide-binding protein BOV_A0352 (527 aa).

Residues 1–23 (MRLRNFYSALALSAAVFAGPLYA) form the signal peptide.

The protein belongs to the bacterial solute-binding protein 5 family. As to quaternary structure, the complex is composed of two ATP-binding proteins (BOV_A0347 and BOV_A0348), two transmembrane proteins (BOV_A0350 and BOV_A0351) and a solute-binding protein (BOV_A0352).

The protein localises to the periplasm. Probably part of an ABC transporter complex that could be involved in peptide import. The protein is Putative ABC transporter peptide-binding protein BOV_A0352 of Brucella ovis (strain ATCC 25840 / 63/290 / NCTC 10512).